Reading from the N-terminus, the 298-residue chain is Aspartate carbamoyltransferase catalytic subunit (298 aa).

Positions 50 and 51 each coordinate carbamoyl phosphate. K79 serves as a coordination point for L-aspartate. Carbamoyl phosphate-binding residues include R100, H128, and Q131. L-aspartate is bound by residues R160 and R221. Residues L260 and P261 each coordinate carbamoyl phosphate.

This sequence belongs to the aspartate/ornithine carbamoyltransferase superfamily. ATCase family. In terms of assembly, heterooligomer of catalytic and regulatory chains.

It catalyses the reaction carbamoyl phosphate + L-aspartate = N-carbamoyl-L-aspartate + phosphate + H(+). It participates in pyrimidine metabolism; UMP biosynthesis via de novo pathway; (S)-dihydroorotate from bicarbonate: step 2/3. Functionally, catalyzes the condensation of carbamoyl phosphate and aspartate to form carbamoyl aspartate and inorganic phosphate, the committed step in the de novo pyrimidine nucleotide biosynthesis pathway. The polypeptide is Aspartate carbamoyltransferase catalytic subunit (Methanosphaerula palustris (strain ATCC BAA-1556 / DSM 19958 / E1-9c)).